The sequence spans 304 residues: Oxygen-dependent coproporphyrinogen-III oxidase (304 aa).

Serine 93 contributes to the substrate binding site. The a divalent metal cation site is built by histidine 97 and histidine 107. The active-site Proton donor is histidine 107. 109–111 (NVR) serves as a coordination point for substrate. Positions 146 and 176 each coordinate a divalent metal cation. The segment at 241-276 (YVEFNLVYDRGTLFGLQSGGRTESILMSLPPQVRWA) is important for dimerization. Residue 259–261 (GGR) participates in substrate binding.

Belongs to the aerobic coproporphyrinogen-III oxidase family. In terms of assembly, homodimer. Requires a divalent metal cation as cofactor.

The protein localises to the cytoplasm. It carries out the reaction coproporphyrinogen III + O2 + 2 H(+) = protoporphyrinogen IX + 2 CO2 + 2 H2O. The protein operates within porphyrin-containing compound metabolism; protoporphyrin-IX biosynthesis; protoporphyrinogen-IX from coproporphyrinogen-III (O2 route): step 1/1. Its function is as follows. Involved in the heme biosynthesis. Catalyzes the aerobic oxidative decarboxylation of propionate groups of rings A and B of coproporphyrinogen-III to yield the vinyl groups in protoporphyrinogen-IX. The polypeptide is Oxygen-dependent coproporphyrinogen-III oxidase (Pseudomonas fluorescens (strain Pf0-1)).